Consider the following 241-residue polypeptide: Sugar fermentation stimulation protein homolog (241 aa).

Belongs to the SfsA family.

The sequence is that of Sugar fermentation stimulation protein homolog from Halorhodospira halophila (strain DSM 244 / SL1) (Ectothiorhodospira halophila (strain DSM 244 / SL1)).